The following is a 688-amino-acid chain: Two-component response regulator ORR23 (688 aa).

In terms of domain architecture, Response regulatory spans 25–140 (RVLAVDDDPV…ELRNIWQHVI (116 aa)). Asp76 carries the 4-aspartylphosphate modification. Residues 161–212 (PPNADSDHVHGHVTCGSPDQSGRPSKKRKEYCSEEEDEGEVNTQDIDDPSAP) form a disordered region. Residues 193–208 (SEEEDEGEVNTQDIDD) show a composition bias toward acidic residues. The myb-like GARP DNA-binding region spans 211–270 (APKKPRVVWSVELHRKFVAAVNQLGIDKAVPKRILELMNVEKLTRENVASHLQKYRLYLK).

This sequence belongs to the ARR family. Type-B subfamily. Post-translationally, two-component system major event consists of a His-to-Asp phosphorelay between a sensor histidine kinase (HK) and a response regulator (RR). In plants, the His-to-Asp phosphorelay involves an additional intermediate named Histidine-containing phosphotransfer protein (HPt). This multistep phosphorelay consists of a His-Asp-His-Asp sequential transfer of a phosphate group between first a His and an Asp of the HK protein, followed by the transfer to a conserved His of the HPt protein and finally the transfer to an Asp in the receiver domain of the RR protein.

The protein localises to the nucleus. Its function is as follows. Transcriptional activator that binds specific DNA sequence. Functions as a response regulator involved in His-to-Asp phosphorelay signal transduction system. Phosphorylation of the Asp residue in the receiver domain activates the ability of the protein to promote the transcription of target genes. May directly activate some type-A response regulators in response to cytokinins. This is Two-component response regulator ORR23 from Oryza sativa subsp. indica (Rice).